The primary structure comprises 119 residues: Ribonuclease P protein component (119 aa).

This sequence belongs to the RnpA family. As to quaternary structure, consists of a catalytic RNA component (M1 or rnpB) and a protein subunit.

The catalysed reaction is Endonucleolytic cleavage of RNA, removing 5'-extranucleotides from tRNA precursor.. Functionally, RNaseP catalyzes the removal of the 5'-leader sequence from pre-tRNA to produce the mature 5'-terminus. It can also cleave other RNA substrates such as 4.5S RNA. The protein component plays an auxiliary but essential role in vivo by binding to the 5'-leader sequence and broadening the substrate specificity of the ribozyme. In Coprothermobacter proteolyticus (strain ATCC 35245 / DSM 5265 / OCM 4 / BT), this protein is Ribonuclease P protein component.